A 276-amino-acid polypeptide reads, in one-letter code: NH(3)-dependent NAD(+) synthetase (276 aa).

46–53 (GISGGQDS) contacts ATP. Position 52 (D52) interacts with Mg(2+). R140 provides a ligand contact to deamido-NAD(+). An ATP-binding site is contributed by T160. Position 165 (E165) interacts with Mg(2+). Residues K173 and D180 each coordinate deamido-NAD(+). Positions 189 and 211 each coordinate ATP. 260 to 261 (HK) serves as a coordination point for deamido-NAD(+).

The protein belongs to the NAD synthetase family. Homodimer.

It catalyses the reaction deamido-NAD(+) + NH4(+) + ATP = AMP + diphosphate + NAD(+) + H(+). It functions in the pathway cofactor biosynthesis; NAD(+) biosynthesis; NAD(+) from deamido-NAD(+) (ammonia route): step 1/1. Catalyzes the ATP-dependent amidation of deamido-NAD to form NAD. Uses ammonia as a nitrogen source. This chain is NH(3)-dependent NAD(+) synthetase, found in Citrobacter koseri (strain ATCC BAA-895 / CDC 4225-83 / SGSC4696).